Here is an 80-residue protein sequence, read N- to C-terminus: Exodeoxyribonuclease 7 small subunit (80 aa).

This sequence belongs to the XseB family. As to quaternary structure, heterooligomer composed of large and small subunits.

The protein localises to the cytoplasm. The catalysed reaction is Exonucleolytic cleavage in either 5'- to 3'- or 3'- to 5'-direction to yield nucleoside 5'-phosphates.. In terms of biological role, bidirectionally degrades single-stranded DNA into large acid-insoluble oligonucleotides, which are then degraded further into small acid-soluble oligonucleotides. The chain is Exodeoxyribonuclease 7 small subunit from Rickettsia canadensis (strain McKiel).